Here is a 473-residue protein sequence, read N- to C-terminus: Hyaluronidase-2 (473 aa).

Residues Met1–Ala20 form the signal peptide. 2 cysteine pairs are disulfide-bonded: Cys47–Cys340 and Cys211–Cys227. N-linked (GlcNAc...) asparagine glycosylation is found at Asn74 and Asn103. The active-site Proton donor is Glu135. Residue Asn357 is glycosylated (N-linked (GlcNAc...) asparagine). The EGF-like domain maps to Ala361 to Gln439. 3 disulfides stabilise this stretch: Cys365–Cys376, Cys370–Cys427, and Cys429–Cys438. A glycan (N-linked (GlcNAc...) asparagine) is linked at Asn390. Asn448 carries the GPI-anchor amidated asparagine; alternate lipid modification. Asn448 carries N-linked (GlcNAc...) asparagine; alternate glycosylation. A propeptide spans Ala449–Leu473 (removed in mature form).

Belongs to the glycosyl hydrolase 56 family. Interacts with MST1R. Widely expressed, with highest expression levels in kidney, lung and liver (at protein level).

The protein resides in the cell membrane. The catalysed reaction is Random hydrolysis of (1-&gt;4)-linkages between N-acetyl-beta-D-glucosamine and D-glucuronate residues in hyaluronate.. In terms of biological role, catalyzes hyaluronan degradation into small fragments that are endocytosed and degraded in lysosomes by HYAL1 and exoglycosidases. Essential for the breakdown of extracellular matrix hyaluronan. The protein is Hyaluronidase-2 (Hyal2) of Mus musculus (Mouse).